A 705-amino-acid chain; its full sequence is uncharacterized protein (705 aa).

A DNA-binding region (zn(2)-C6 fungal-type) is located at residues 24–52 (CHFCRVRKLKCDRVRPFCGSCSSRNRKQC).

The protein localises to the nucleus. This is an uncharacterized protein from Saccharomyces cerevisiae (strain ATCC 204508 / S288c) (Baker's yeast).